The chain runs to 146 residues: Protein cornichon homolog 1 (146 aa).

A run of 3 helical transmembrane segments spans residues Ile9 to Leu29, Cys61 to Val81, and Leu114 to Tyr134.

The protein belongs to the cornichon family.

It localises to the membrane. In Arabidopsis thaliana (Mouse-ear cress), this protein is Protein cornichon homolog 1.